We begin with the raw amino-acid sequence, 382 residues long: D-galactonate dehydratase (382 aa).

D183 is a Mg(2+) binding site. H185 (proton donor) is an active-site residue. Residues E209 and E235 each contribute to the Mg(2+) site. H285 serves as the catalytic Proton acceptor.

This sequence belongs to the mandelate racemase/muconate lactonizing enzyme family. GalD subfamily. Requires Mg(2+) as cofactor.

It catalyses the reaction D-galactonate = 2-dehydro-3-deoxy-D-galactonate + H2O. It functions in the pathway carbohydrate acid metabolism; D-galactonate degradation; D-glyceraldehyde 3-phosphate and pyruvate from D-galactonate: step 1/3. Its function is as follows. Catalyzes the dehydration of D-galactonate to 2-keto-3-deoxy-D-galactonate. This chain is D-galactonate dehydratase, found in Salmonella gallinarum (strain 287/91 / NCTC 13346).